Reading from the N-terminus, the 249-residue chain is Histone H1 (249 aa).

2 stretches are compositionally biased toward low complexity: residues Met1–Ser19 and Lys27–Pro43. Disordered stretches follow at residues Met1–Val53 and Gln105–Lys249. Positions Thr45–Ala119 constitute an H15 domain. Basic and acidic residues predominate over residues Ser121 to Lys134. Residues Ala146–Lys158 are compositionally biased toward basic residues. Residues Lys173–Lys190 are compositionally biased toward basic and acidic residues. A compositionally biased stretch (low complexity) spans Lys195–Lys233. Residues Ala234 to Lys249 show a composition bias toward basic residues.

It belongs to the histone H1/H5 family.

The protein localises to the nucleus. Its subcellular location is the chromosome. Histones H1 are necessary for the condensation of nucleosome chains into higher-order structures. The sequence is that of Histone H1 (His1) from Drosophila hydei (Fruit fly).